The primary structure comprises 62 residues: Large ribosomal subunit protein bL33 (62 aa).

It belongs to the bacterial ribosomal protein bL33 family.

In Phocaeicola vulgatus (strain ATCC 8482 / DSM 1447 / JCM 5826 / CCUG 4940 / NBRC 14291 / NCTC 11154) (Bacteroides vulgatus), this protein is Large ribosomal subunit protein bL33.